The sequence spans 351 residues: Photosystem II D2 protein (351 aa).

Residues Thr-39–Thr-59 traverse the membrane as a helical segment. Residue His-116 participates in chlorophyll a binding. A helical membrane pass occupies residues Gly-123–Pro-139. Pheophytin a contacts are provided by Gln-128 and Asn-141. The chain crosses the membrane as a helical span at residues Val-151 to Ser-164. Chlorophyll a is bound at residue His-196. A helical membrane pass occupies residues Gly-206–Glu-226. Positions 213 and 260 each coordinate a plastoquinone. A Fe cation-binding site is contributed by His-213. Position 267 (His-267) interacts with Fe cation. Residues Gly-277–Arg-293 traverse the membrane as a helical segment.

The protein belongs to the reaction center PufL/M/PsbA/D family. PSII is composed of 1 copy each of membrane proteins PsbA, PsbB, PsbC, PsbD, PsbE, PsbF, PsbH, PsbI, PsbJ, PsbK, PsbL, PsbM, PsbT, PsbX, PsbY, PsbZ, Psb30/Ycf12, peripheral proteins PsbO, CyanoQ (PsbQ), PsbU, PsbV and a large number of cofactors. It forms dimeric complexes. The D1/D2 heterodimer binds P680, chlorophylls that are the primary electron donor of PSII, and subsequent electron acceptors. It shares a non-heme iron and each subunit binds pheophytin, quinone, additional chlorophylls, carotenoids and lipids. There is also a Cl(-1) ion associated with D1 and D2, which is required for oxygen evolution. The PSII complex binds additional chlorophylls, carotenoids and specific lipids. is required as a cofactor.

The protein resides in the host cellular thylakoid membrane. It carries out the reaction 2 a plastoquinone + 4 hnu + 2 H2O = 2 a plastoquinol + O2. In terms of biological role, photosystem II (PSII) is a light-driven water:plastoquinone oxidoreductase that uses light energy to abstract electrons from H(2)O, generating O(2) and a proton gradient subsequently used for ATP formation. It consists of a core antenna complex that captures photons, and an electron transfer chain that converts photonic excitation into a charge separation. The D1/D2 (PsbA/PsbD) reaction center heterodimer binds P680, the primary electron donor of PSII as well as several subsequent electron acceptors. D2 is needed for assembly of a stable PSII complex. The sequence is that of Photosystem II D2 protein (psbD) from Synechococcus phage S-RSM2.